The sequence spans 138 residues: Large ribosomal subunit protein uL16 (138 aa).

Residues 1-17 (MLIPRKVKHRKQHHPRQ) show a composition bias toward basic residues. A disordered region spans residues 1–24 (MLIPRKVKHRKQHHPRQRGIASGG).

It belongs to the universal ribosomal protein uL16 family. In terms of assembly, part of the 50S ribosomal subunit.

In terms of biological role, binds 23S rRNA and is also seen to make contacts with the A and possibly P site tRNAs. This Mycolicibacterium gilvum (strain PYR-GCK) (Mycobacterium gilvum (strain PYR-GCK)) protein is Large ribosomal subunit protein uL16.